Reading from the N-terminus, the 294-residue chain is Probable endonuclease 4 (294 aa).

Zn(2+) contacts are provided by His78, His118, Glu155, Asp189, His192, His226, Asp239, His241, and Glu271.

It belongs to the AP endonuclease 2 family. Zn(2+) is required as a cofactor.

It catalyses the reaction Endonucleolytic cleavage to 5'-phosphooligonucleotide end-products.. Its function is as follows. Endonuclease IV plays a role in DNA repair. It cleaves phosphodiester bonds at apurinic or apyrimidinic (AP) sites, generating a 3'-hydroxyl group and a 5'-terminal sugar phosphate. This is Probable endonuclease 4 from Oleidesulfovibrio alaskensis (strain ATCC BAA-1058 / DSM 17464 / G20) (Desulfovibrio alaskensis).